Consider the following 73-residue polypeptide: UPF0235 protein PCC7424_0673 (73 aa).

This sequence belongs to the UPF0235 family.

This Gloeothece citriformis (strain PCC 7424) (Cyanothece sp. (strain PCC 7424)) protein is UPF0235 protein PCC7424_0673.